Consider the following 294-residue polypeptide: N-acetylmuramic acid 6-phosphate etherase (294 aa).

The SIS domain maps to 54 to 217 (VIKSFEEEGR…STASMIGVGK (164 aa)). The active-site Proton donor is the Glu82. Glu113 is an active-site residue.

The protein belongs to the GCKR-like family. MurNAc-6-P etherase subfamily. As to quaternary structure, homodimer.

The enzyme catalyses N-acetyl-D-muramate 6-phosphate + H2O = N-acetyl-D-glucosamine 6-phosphate + (R)-lactate. It participates in amino-sugar metabolism; N-acetylmuramate degradation. Functionally, specifically catalyzes the cleavage of the D-lactyl ether substituent of MurNAc 6-phosphate, producing GlcNAc 6-phosphate and D-lactate. The protein is N-acetylmuramic acid 6-phosphate etherase of Bacillus cereus (strain G9842).